The sequence spans 876 residues: Valine--tRNA ligase (876 aa).

A 'HIGH' region motif is present at residues 44–54 (PNVTGKLHLGH). A 'KMSKS' region motif is present at residues 520 to 524 (KMSKS). Residue Lys523 coordinates ATP. Residues 805-876 (LEGLIDMDKE…VKARIEQLKA (72 aa)) adopt a coiled-coil conformation.

This sequence belongs to the class-I aminoacyl-tRNA synthetase family. ValS type 1 subfamily. In terms of assembly, monomer.

The protein localises to the cytoplasm. The enzyme catalyses tRNA(Val) + L-valine + ATP = L-valyl-tRNA(Val) + AMP + diphosphate. Catalyzes the attachment of valine to tRNA(Val). As ValRS can inadvertently accommodate and process structurally similar amino acids such as threonine, to avoid such errors, it has a 'posttransfer' editing activity that hydrolyzes mischarged Thr-tRNA(Val) in a tRNA-dependent manner. The chain is Valine--tRNA ligase from Staphylococcus aureus (strain JH1).